We begin with the raw amino-acid sequence, 519 residues long: Protein nucleotidyltransferase YdiU (519 aa).

Residues glycine 100, glycine 102, arginine 103, lysine 123, aspartate 135, glycine 136, arginine 193, and arginine 200 each coordinate ATP. Aspartate 270 acts as the Proton acceptor in catalysis. Mg(2+) is bound by residues asparagine 271 and aspartate 280. Residue aspartate 280 coordinates ATP.

Belongs to the SELO family. It depends on Mg(2+) as a cofactor. Requires Mn(2+) as cofactor.

It carries out the reaction L-seryl-[protein] + ATP = 3-O-(5'-adenylyl)-L-seryl-[protein] + diphosphate. It catalyses the reaction L-threonyl-[protein] + ATP = 3-O-(5'-adenylyl)-L-threonyl-[protein] + diphosphate. The enzyme catalyses L-tyrosyl-[protein] + ATP = O-(5'-adenylyl)-L-tyrosyl-[protein] + diphosphate. The catalysed reaction is L-histidyl-[protein] + UTP = N(tele)-(5'-uridylyl)-L-histidyl-[protein] + diphosphate. It carries out the reaction L-seryl-[protein] + UTP = O-(5'-uridylyl)-L-seryl-[protein] + diphosphate. It catalyses the reaction L-tyrosyl-[protein] + UTP = O-(5'-uridylyl)-L-tyrosyl-[protein] + diphosphate. Its function is as follows. Nucleotidyltransferase involved in the post-translational modification of proteins. It can catalyze the addition of adenosine monophosphate (AMP) or uridine monophosphate (UMP) to a protein, resulting in modifications known as AMPylation and UMPylation. This chain is Protein nucleotidyltransferase YdiU, found in Xylella fastidiosa (strain Temecula1 / ATCC 700964).